We begin with the raw amino-acid sequence, 301 residues long: Putative carboxypeptidase slr1534 (301 aa).

The Nucleophile role is filled by Ser-116. Residues Glu-206 and His-276 each act as charge relay system in the active site.

This sequence belongs to the peptidase S66 family.

The chain is Putative carboxypeptidase slr1534 from Synechocystis sp. (strain ATCC 27184 / PCC 6803 / Kazusa).